Consider the following 592-residue polypeptide: Aspartate--tRNA ligase (592 aa).

E176 lines the L-aspartate pocket. The segment at 200 to 203 (QIFK) is aspartate. R222 provides a ligand contact to L-aspartate. Residues 222 to 224 (RDE) and Q231 each bind ATP. Residue H450 coordinates L-aspartate. Position 484 (E484) interacts with ATP. R491 is a binding site for L-aspartate. 536–539 (GLDR) contacts ATP.

It belongs to the class-II aminoacyl-tRNA synthetase family. Type 1 subfamily. Homodimer.

The protein localises to the cytoplasm. It catalyses the reaction tRNA(Asp) + L-aspartate + ATP = L-aspartyl-tRNA(Asp) + AMP + diphosphate. Functionally, catalyzes the attachment of L-aspartate to tRNA(Asp) in a two-step reaction: L-aspartate is first activated by ATP to form Asp-AMP and then transferred to the acceptor end of tRNA(Asp). The protein is Aspartate--tRNA ligase of Macrococcus caseolyticus (strain JCSC5402) (Macrococcoides caseolyticum).